The following is a 1358-amino-acid chain: Probable serine/threonine-protein kinase ifkB (1358 aa).

One can recognise a Protein kinase domain in the interval 1–582 (MIGKGGFGVV…TKQLLESGLL (582 aa)). Residues 2–10 (IGKGGFGVV) and Lys25 each bind ATP. The interval 125-359 (GANNTAGGGD…SSSRKKPPKE (235 aa)) is disordered. The segment covering 136–148 (VSNANSNKSMIVG) has biased composition (polar residues). Positions 149 to 196 (NNNKKLTLSSSNTSSSSSLLSNNKSKILNTSKSTSTNTSTSTSTSNTN) are enriched in low complexity. Positions 197 to 208 (KNKKISKKKKSK) are enriched in basic residues. Low complexity predominate over residues 258–285 (NNNNDSNNNYHSDNESDSFSGSISMSDG). Residues 306–333 (DDNENDDDDEEDDDDEYDEEDDDYETFD) are compositionally biased toward acidic residues. Positions 342 to 351 (SNNSKLSTSS) are enriched in low complexity. Catalysis depends on Asp413, which acts as the Proton acceptor. Disordered stretches follow at residues 445–470 (DDLNSSTSNAANNINLSSSTNSTAQQ) and 1148–1204 (GSGG…QQTS). Residues 447–466 (LNSSTSNAANNINLSSSTNS) are compositionally biased toward low complexity. Residues 1148-1172 (GSGGSGGSGGGSSMSSGGGGGGNSN) are compositionally biased toward gly residues. The span at 1185 to 1199 (SNQSTSSSGNSNNSN) shows a compositional bias: low complexity.

It belongs to the protein kinase superfamily. Ser/Thr protein kinase family. GCN2 subfamily.

The catalysed reaction is L-seryl-[protein] + ATP = O-phospho-L-seryl-[protein] + ADP + H(+). It carries out the reaction L-threonyl-[protein] + ATP = O-phospho-L-threonyl-[protein] + ADP + H(+). In Dictyostelium discoideum (Social amoeba), this protein is Probable serine/threonine-protein kinase ifkB (ifkB).